We begin with the raw amino-acid sequence, 321 residues long: UDP-N-acetylenolpyruvoylglucosamine reductase (321 aa).

In terms of domain architecture, FAD-binding PCMH-type spans 36–203; sequence FRAGGLAEVM…TGALFEGYPE (168 aa). R183 is a catalytic residue. The Proton donor role is filled by S232. The active site involves E302.

Belongs to the MurB family. FAD is required as a cofactor.

The protein resides in the cytoplasm. The catalysed reaction is UDP-N-acetyl-alpha-D-muramate + NADP(+) = UDP-N-acetyl-3-O-(1-carboxyvinyl)-alpha-D-glucosamine + NADPH + H(+). It functions in the pathway cell wall biogenesis; peptidoglycan biosynthesis. Cell wall formation. The polypeptide is UDP-N-acetylenolpyruvoylglucosamine reductase (Agrobacterium fabrum (strain C58 / ATCC 33970) (Agrobacterium tumefaciens (strain C58))).